The chain runs to 738 residues: Cleavage and polyadenylation specificity factor subunit 2 (738 aa).

It belongs to the metallo-beta-lactamase superfamily. RNA-metabolizing metallo-beta-lactamase-like family. CPSF2/YSH1 subfamily. In terms of assembly, CPSF is a heterotetramer composed of four distinct subunits 160, 100, 70 and 30 kDa.

The protein localises to the nucleus. In terms of biological role, CPSF plays a key role in pre-mRNA 3'-end formation, recognizing the AAUAAA signal sequence and interacting with poly(A)polymerase and other factors to bring about cleavage and poly(A) addition. The sequence is that of Cleavage and polyadenylation specificity factor subunit 2 from Oryza sativa subsp. japonica (Rice).